The sequence spans 367 residues: TATA-box-binding protein-like (367 aa).

The disordered stretch occupies residues 1-26 (MKKQSKTHKVDYKYYNSGSKTSRNRN). Positions 16-26 (NSGSKTSRNRN) are enriched in polar residues.

This sequence belongs to the TBP family.

This is TATA-box-binding protein-like from Acanthamoeba polyphaga (Amoeba).